The primary structure comprises 297 residues: MLDNKDIATPSRTRALLDKYGFNFKKSLGQNFLIDVNIINNIIDASDIDAQTGVIEIGPGMGSLTEQLARHAKRVLAFEIDQRLIPVLNDTLSPYDNVTVINEDILKANIKEAVENHLQDCEKIMVVANLPYYITTPILLNLMQQDIPIDGYVVMMQKEVGERLNAEIGSKAYGSLSIVVQYYTETSKVLTVPKSVFMPPPNVDSIVVKLMQRTEPLVTVDNEEAFFKLAKAAFAQRRKTINNNYQNYFKDGKQHKEVIIQWLEQAGIDPRRRGETLSIQDFAKLYEEKKKFPQLEN.

S-adenosyl-L-methionine contacts are provided by asparagine 31, leucine 33, glycine 58, glutamate 79, aspartate 104, and asparagine 129.

This sequence belongs to the class I-like SAM-binding methyltransferase superfamily. rRNA adenine N(6)-methyltransferase family. RsmA subfamily.

The protein resides in the cytoplasm. The enzyme catalyses adenosine(1518)/adenosine(1519) in 16S rRNA + 4 S-adenosyl-L-methionine = N(6)-dimethyladenosine(1518)/N(6)-dimethyladenosine(1519) in 16S rRNA + 4 S-adenosyl-L-homocysteine + 4 H(+). Its function is as follows. Specifically dimethylates two adjacent adenosines (A1518 and A1519) in the loop of a conserved hairpin near the 3'-end of 16S rRNA in the 30S particle. May play a critical role in biogenesis of 30S subunits. This is Ribosomal RNA small subunit methyltransferase A from Staphylococcus aureus (strain MRSA252).